Consider the following 396-residue polypeptide: Alanine racemase (396 aa).

The active-site Proton acceptor; specific for D-alanine is the Lys46. At Lys46 the chain carries N6-(pyridoxal phosphate)lysine. Arg145 is a substrate binding site. Residue Tyr280 is the Proton acceptor; specific for L-alanine of the active site. Met328 contacts substrate.

The protein belongs to the alanine racemase family. Pyridoxal 5'-phosphate serves as cofactor.

It catalyses the reaction L-alanine = D-alanine. It participates in amino-acid biosynthesis; D-alanine biosynthesis; D-alanine from L-alanine: step 1/1. Catalyzes the interconversion of L-alanine and D-alanine. May also act on other amino acids. In Brucella canis (strain ATCC 23365 / NCTC 10854 / RM-666), this protein is Alanine racemase (alr).